Reading from the N-terminus, the 363-residue chain is Aminomethyltransferase (363 aa).

It belongs to the GcvT family. As to quaternary structure, the glycine cleavage system is composed of four proteins: P, T, L and H.

It carries out the reaction N(6)-[(R)-S(8)-aminomethyldihydrolipoyl]-L-lysyl-[protein] + (6S)-5,6,7,8-tetrahydrofolate = N(6)-[(R)-dihydrolipoyl]-L-lysyl-[protein] + (6R)-5,10-methylene-5,6,7,8-tetrahydrofolate + NH4(+). The glycine cleavage system catalyzes the degradation of glycine. The protein is Aminomethyltransferase of Thermotoga neapolitana (strain ATCC 49049 / DSM 4359 / NBRC 107923 / NS-E).